The chain runs to 156 residues: SsrA-binding protein (156 aa).

It belongs to the SmpB family.

It is found in the cytoplasm. In terms of biological role, required for rescue of stalled ribosomes mediated by trans-translation. Binds to transfer-messenger RNA (tmRNA), required for stable association of tmRNA with ribosomes. tmRNA and SmpB together mimic tRNA shape, replacing the anticodon stem-loop with SmpB. tmRNA is encoded by the ssrA gene; the 2 termini fold to resemble tRNA(Ala) and it encodes a 'tag peptide', a short internal open reading frame. During trans-translation Ala-aminoacylated tmRNA acts like a tRNA, entering the A-site of stalled ribosomes, displacing the stalled mRNA. The ribosome then switches to translate the ORF on the tmRNA; the nascent peptide is terminated with the 'tag peptide' encoded by the tmRNA and targeted for degradation. The ribosome is freed to recommence translation, which seems to be the essential function of trans-translation. This Clostridium tetani (strain Massachusetts / E88) protein is SsrA-binding protein.